Consider the following 342-residue polypeptide: Galactose mutarotase (342 aa).

Alanine 2 carries the post-translational modification N-acetylalanine. Serine 14 carries the post-translational modification Phosphoserine. Residues 81 to 82 and histidine 107 each bind beta-D-galactose; that span reads NR. Serine 124 carries the post-translational modification Phosphoserine. The active-site Proton donor is histidine 176. Beta-D-galactose is bound by residues 176–178, aspartate 243, glutamine 279, and glutamate 307; that span reads HSY. Glutamate 307 functions as the Proton acceptor in the catalytic mechanism.

It belongs to the aldose epimerase family. As to quaternary structure, monomer.

The protein resides in the cytoplasm. It carries out the reaction alpha-D-galactose = beta-D-galactose. It catalyses the reaction alpha-D-glucose = beta-D-glucose. It participates in carbohydrate metabolism; hexose metabolism. The protein operates within carbohydrate metabolism; galactose metabolism. Functionally, mutarotase that catalyzes the interconversion of beta-D-galactose and alpha-D-galactose during galactose metabolism. Beta-D-galactose is metabolized in the liver into glucose 1-phosphate, the primary metabolic fuel, by the action of four enzymes that constitute the Leloir pathway: GALM, GALK1 (galactokinase), GALT (galactose-1-phosphate uridylyltransferase) and GALE (UDP-galactose-4'-epimerase). Involved in the maintenance of the equilibrium between the beta- and alpha-anomers of galactose, therefore ensuring a sufficient supply of the alpha-anomer for GALK1. Also active on D-glucose although shows a preference for galactose over glucose. The sequence is that of Galactose mutarotase from Homo sapiens (Human).